A 238-amino-acid polypeptide reads, in one-letter code: ATP-dependent dethiobiotin synthetase BioD (238 aa).

13–18 (EIGKTV) provides a ligand contact to ATP. Mg(2+) is bound at residue threonine 17. The active site involves lysine 38. Threonine 42 is a binding site for substrate. Arginine 59 and glutamate 111 together coordinate Mg(2+). Residues 111 to 114 (EGAG), 175 to 176 (NQ), and 204 to 206 (PLL) each bind ATP.

This sequence belongs to the dethiobiotin synthetase family. In terms of assembly, homodimer. Mg(2+) is required as a cofactor.

It is found in the cytoplasm. It carries out the reaction (7R,8S)-7,8-diammoniononanoate + CO2 + ATP = (4R,5S)-dethiobiotin + ADP + phosphate + 3 H(+). It functions in the pathway cofactor biosynthesis; biotin biosynthesis; biotin from 7,8-diaminononanoate: step 1/2. In terms of biological role, catalyzes a mechanistically unusual reaction, the ATP-dependent insertion of CO2 between the N7 and N8 nitrogen atoms of 7,8-diaminopelargonic acid (DAPA, also called 7,8-diammoniononanoate) to form a ureido ring. In Geobacillus kaustophilus (strain HTA426), this protein is ATP-dependent dethiobiotin synthetase BioD.